The sequence spans 152 residues: Ribosome maturation factor RimP (152 aa).

The protein belongs to the RimP family.

It localises to the cytoplasm. Functionally, required for maturation of 30S ribosomal subunits. The protein is Ribosome maturation factor RimP of Porphyromonas gingivalis (strain ATCC 33277 / DSM 20709 / CIP 103683 / JCM 12257 / NCTC 11834 / 2561).